A 62-amino-acid chain; its full sequence is Large ribosomal subunit protein bL28 (62 aa).

Belongs to the bacterial ribosomal protein bL28 family.

This Koribacter versatilis (strain Ellin345) protein is Large ribosomal subunit protein bL28.